Consider the following 162-residue polypeptide: Protein-export protein SecB (162 aa).

This sequence belongs to the SecB family. Homotetramer, a dimer of dimers. One homotetramer interacts with 1 SecA dimer.

The protein resides in the cytoplasm. One of the proteins required for the normal export of preproteins out of the cell cytoplasm. It is a molecular chaperone that binds to a subset of precursor proteins, maintaining them in a translocation-competent state. It also specifically binds to its receptor SecA. This is Protein-export protein SecB from Pseudomonas savastanoi pv. phaseolicola (strain 1448A / Race 6) (Pseudomonas syringae pv. phaseolicola (strain 1448A / Race 6)).